The sequence spans 1229 residues: DNA-directed RNA polymerase subunit beta (1229 aa).

The disordered stretch occupies residues 1175 to 1229 (ESIDEDEQPQGLGAFERGLEEVENGEEDDDKEKFYEDLMDASQEQDESADDDIDE). 2 stretches are compositionally biased toward acidic residues: residues 1195–1204 (EVENGEEDDD) and 1211–1229 (DLMD…DIDE).

This sequence belongs to the RNA polymerase beta chain family. As to quaternary structure, the RNAP catalytic core consists of 2 alpha, 1 beta, 1 beta' and 1 omega subunit. When a sigma factor is associated with the core the holoenzyme is formed, which can initiate transcription.

It catalyses the reaction RNA(n) + a ribonucleoside 5'-triphosphate = RNA(n+1) + diphosphate. DNA-dependent RNA polymerase catalyzes the transcription of DNA into RNA using the four ribonucleoside triphosphates as substrates. This chain is DNA-directed RNA polymerase subunit beta, found in Caldicellulosiruptor saccharolyticus (strain ATCC 43494 / DSM 8903 / Tp8T 6331).